Consider the following 232-residue polypeptide: Y-linked testis-specific protein 1 (232 aa).

The protein belongs to the SPIN/STSY family. As to expression, expressed in testis (at protein level).

This Mus musculus (Mouse) protein is Y-linked testis-specific protein 1 (Ssty1).